The primary structure comprises 238 residues: Cysteine-rich venom protein 2 (238 aa).

A signal peptide spans 1–19 (MIAFIVLLSLAAVLQQSSG). An SCP domain is found at 38-164 (VDKHNALRRS…STKYLYVCQY (127 aa)). Cystine bridges form between Cys75–Cys153, Cys92–Cys165, Cys148–Cys162, Cys184–Cys191, Cys187–Cys196, Cys200–Cys233, Cys209–Cys227, and Cys218–Cys231. A ShKT domain is found at 200–233 (CEYEDAYTNCNDLVKERKCQTEWIKSQCPATCFC).

The protein belongs to the CRISP family. Expressed by the venom gland.

The protein localises to the secreted. Functionally, blocks contraction of smooth muscle elicited by high potassium-induced depolarization, but does not block caffeine-stimulated contraction. May target voltage-gated calcium channels (Cav) on smooth muscle. This is Cysteine-rich venom protein 2 from Hydrophis hardwickii (Hardwick's spine-bellied seasnake).